The following is a 168-amino-acid chain: uncharacterized protein (168 aa).

The next 2 helical transmembrane spans lie at 41 to 61 (LLPW…LFFI) and 133 to 153 (KFVI…FFVL).

It is found in the cell membrane. This is an uncharacterized protein from Thermotoga maritima (strain ATCC 43589 / DSM 3109 / JCM 10099 / NBRC 100826 / MSB8).